A 252-amino-acid polypeptide reads, in one-letter code: Hydroxyacylglutathione hydrolase (252 aa).

Zn(2+) is bound by residues histidine 54, histidine 56, aspartate 58, histidine 59, histidine 111, aspartate 128, and histidine 166.

This sequence belongs to the metallo-beta-lactamase superfamily. Glyoxalase II family. In terms of assembly, monomer. The cofactor is Zn(2+).

The catalysed reaction is an S-(2-hydroxyacyl)glutathione + H2O = a 2-hydroxy carboxylate + glutathione + H(+). It participates in secondary metabolite metabolism; methylglyoxal degradation; (R)-lactate from methylglyoxal: step 2/2. Thiolesterase that catalyzes the hydrolysis of S-D-lactoyl-glutathione to form glutathione and D-lactic acid. This Vibrio parahaemolyticus serotype O3:K6 (strain RIMD 2210633) protein is Hydroxyacylglutathione hydrolase.